A 346-amino-acid chain; its full sequence is 4-hydroxy-2-oxovalerate aldolase 2 (346 aa).

The region spanning V8–Q260 is the Pyruvate carboxyltransferase domain. R16–D17 serves as a coordination point for substrate. Residue D17 coordinates Mn(2+). The active-site Proton acceptor is the H20. Substrate-binding residues include S170 and H199. Mn(2+) contacts are provided by H199 and H201. A substrate-binding site is contributed by Y290.

Belongs to the 4-hydroxy-2-oxovalerate aldolase family.

It catalyses the reaction (S)-4-hydroxy-2-oxopentanoate = acetaldehyde + pyruvate. In Metapseudomonas furukawaii (Pseudomonas furukawaii), this protein is 4-hydroxy-2-oxovalerate aldolase 2 (bphX3).